Consider the following 155-residue polypeptide: Telokin-like protein 20 homolog (155 aa).

The segment at 109–155 (KRAVAPPHHEPEPVPAEEGAVADRAEPESGDAPPSPKKQKLDEREQD) is disordered.

The sequence is that of Telokin-like protein 20 homolog from Orgyia pseudotsugata multicapsid polyhedrosis virus (OpMNPV).